We begin with the raw amino-acid sequence, 115 residues long: U3-lycotoxin-Ls1k (115 aa).

The signal sequence occupies residues 1–20 (MKFVLLFGVLLVTLFSYSSA). The propeptide occupies 21-44 (EMLDDFDQADEDELLSLIEKEEAR). Cystine bridges form between cysteine 48–cysteine 63, cysteine 55–cysteine 72, cysteine 62–cysteine 87, and cysteine 74–cysteine 85.

Belongs to the neurotoxin 19 (CSTX) family. 01 subfamily. In terms of tissue distribution, expressed by the venom gland.

The protein localises to the secreted. This chain is U3-lycotoxin-Ls1k, found in Lycosa singoriensis (Wolf spider).